The chain runs to 1471 residues: Myosin-4 (1471 aa).

Positions 4–57 (EVGTKCWYPHKEQGWIGGEVTKNDFFEGTFHLELKLEDGETVSIETNSFENDDD) constitute a Myosin N-terminal SH3-like domain. Residues 71 to 777 (ESTDDLTTLS…MLAFLEKLRT (707 aa)) enclose the Myosin motor domain. 165-172 (GESGAGKT) is a binding site for ATP. The actin-binding stretch occupies residues 647 to 669 (LGELMAIINSTNVHYIRCIKPNS). IQ domains lie at 781-801 (NEIC…LQYL), 804-824 (MESI…TRVD), 829-849 (TRAA…EYYR), 876-898 (MLMA…DYRT), and 899-928 (LKRS…EVEE). Residues 938–1063 (GLLEEAIEFK…LAFIENVIAQ (126 aa)) adopt a coiled-coil conformation. A Dilute domain is found at 1164–1419 (SKVLLTVESI…LNYLANVIKR (256 aa)).

This sequence belongs to the TRAFAC class myosin-kinesin ATPase superfamily. Myosin family. Interacts with SHE2 and SHE3.

Its subcellular location is the bud. In terms of biological role, part of the mRNA localization machinery that restricts accumulation of certain proteins to the bud and in the daughter cell. Recruited to specific mRNAs including the ASH1 mRNA, coding for a repressor of the HO endonuclease, via its interaction with SHE3. The chain is Myosin-4 (MYO4) from Saccharomyces cerevisiae (strain ATCC 204508 / S288c) (Baker's yeast).